The sequence spans 165 residues: MAQNKANTVSQLQSLKNKSGKSYNQLAEETGLTNVYVAQLLRRQAHLKPETAPKLKAALPELPEELIHEMMKPPLRSYDPNIIQDPTVYRLNEAVMHFGESIKEIINEEFGDGIMSAIDFYCSVDKVQGVDGKDRVVLTFDGKYLPHSEQKTEHMVSRTRPLEKQ.

The tract at residues 1–20 (MAQNKANTVSQLQSLKNKSG) is disordered. Catalysis depends on residues arginine 90, glutamate 93, and serine 116.

This sequence belongs to the cyanase family.

The catalysed reaction is cyanate + hydrogencarbonate + 3 H(+) = NH4(+) + 2 CO2. In terms of biological role, catalyzes the reaction of cyanate with bicarbonate to produce ammonia and carbon dioxide. The polypeptide is Cyanate hydratase (Medicago truncatula (Barrel medic)).